Reading from the N-terminus, the 160-residue chain is SsrA-binding protein (160 aa).

The protein belongs to the SmpB family.

It is found in the cytoplasm. Functionally, required for rescue of stalled ribosomes mediated by trans-translation. Binds to transfer-messenger RNA (tmRNA), required for stable association of tmRNA with ribosomes. tmRNA and SmpB together mimic tRNA shape, replacing the anticodon stem-loop with SmpB. tmRNA is encoded by the ssrA gene; the 2 termini fold to resemble tRNA(Ala) and it encodes a 'tag peptide', a short internal open reading frame. During trans-translation Ala-aminoacylated tmRNA acts like a tRNA, entering the A-site of stalled ribosomes, displacing the stalled mRNA. The ribosome then switches to translate the ORF on the tmRNA; the nascent peptide is terminated with the 'tag peptide' encoded by the tmRNA and targeted for degradation. The ribosome is freed to recommence translation, which seems to be the essential function of trans-translation. The polypeptide is SsrA-binding protein (Dinoroseobacter shibae (strain DSM 16493 / NCIMB 14021 / DFL 12)).